We begin with the raw amino-acid sequence, 160 residues long: Arsenate reductase 2.1 (160 aa).

Residues 42–143 (SNPRVAIIDV…WELSGQPVCR (102 aa)) form the Rhodanese domain. Cysteine 94 functions as the Cysteine persulfide intermediate in the catalytic mechanism.

The catalysed reaction is [glutaredoxin]-dithiol + arsenate + glutathione + H(+) = glutathionyl-S-S-[glutaredoxin] + arsenite + H2O. Possesses arsenate reductase activity in vitro. Catalyzes the reduction of arsenate [As(V)] to arsenite [As(III)]. May play a role in arsenic retention in roots. Functionally, possesses phosphatase activity towards p-nitrophenyl phosphate in vitro. The chain is Arsenate reductase 2.1 (ACR2.1) from Oryza sativa subsp. japonica (Rice).